We begin with the raw amino-acid sequence, 410 residues long: Phospho-N-acetylmuramoyl-pentapeptide-transferase (410 aa).

10 helical membrane passes run 23 to 43 (YITF…TIYG), 73 to 93 (TPTM…FLFA), 96 to 116 (HNIY…IGFV), 132 to 152 (GIFK…VLYF), 215 to 235 (WAWL…SNGA), 248 to 268 (TSAV…NIIF), 285 to 305 (VFIS…SFPA), 307 to 327 (VFMG…LAIA), 332 to 352 (ILIV…IIQV), and 387 to 407 (KIVT…IVTL).

Belongs to the glycosyltransferase 4 family. MraY subfamily. Requires Mg(2+) as cofactor.

Its subcellular location is the cell inner membrane. The catalysed reaction is UDP-N-acetyl-alpha-D-muramoyl-L-alanyl-gamma-D-glutamyl-meso-2,6-diaminopimeloyl-D-alanyl-D-alanine + di-trans,octa-cis-undecaprenyl phosphate = di-trans,octa-cis-undecaprenyl diphospho-N-acetyl-alpha-D-muramoyl-L-alanyl-D-glutamyl-meso-2,6-diaminopimeloyl-D-alanyl-D-alanine + UMP. It functions in the pathway cell wall biogenesis; peptidoglycan biosynthesis. Its function is as follows. Catalyzes the initial step of the lipid cycle reactions in the biosynthesis of the cell wall peptidoglycan: transfers peptidoglycan precursor phospho-MurNAc-pentapeptide from UDP-MurNAc-pentapeptide onto the lipid carrier undecaprenyl phosphate, yielding undecaprenyl-pyrophosphoryl-MurNAc-pentapeptide, known as lipid I. This chain is Phospho-N-acetylmuramoyl-pentapeptide-transferase, found in Flavobacterium johnsoniae (strain ATCC 17061 / DSM 2064 / JCM 8514 / BCRC 14874 / CCUG 350202 / NBRC 14942 / NCIMB 11054 / UW101) (Cytophaga johnsonae).